The sequence spans 455 residues: Folate transporter 2 (455 aa).

8 consecutive transmembrane segments (helical) span residues 42–64, 84–103, 110–131, 137–157, 177–195, 201–221, 242–261, and 281–301; these read IVVY…IYYL, YIPF…FSIF, YLFL…LNLS, LILF…EALV, IASK…GYFL, EYIF…CLFL, FINT…YMSG, and SFMG…IIIY. The N-linked (GlcNAc...) asparagine glycan is linked to Asn-307. A run of 2 helical transmembrane segments spans residues 313–331 and 347–367; these read TLII…PIIL and VLSG…PLFI. Asn-416 carries an N-linked (GlcNAc...) asparagine glycan. A helical membrane pass occupies residues 417-438; sequence LSLYILTCGFFLLFSLTLVPLL.

This sequence belongs to the major facilitator superfamily. Folate-biopterin transporter (TC 2.A.71) family.

The protein localises to the cell membrane. The catalysed reaction is folate(in) + H(+)(in) = folate(out) + H(+)(out). It carries out the reaction (6S)-5-methyl-5,6,7,8-tetrahydrofolate(in) + H(+)(in) = (6S)-5-methyl-5,6,7,8-tetrahydrofolate(out) + H(+)(out). With respect to regulation, transport of folates is inhibited by probenecid and methotrexate. Functionally, folate transporter with broad substrate specificity. Transports folic acid, folinic acid, pteroic acid, dihydropteroic acid, the folate precursor p-amino benzoic acid (pABA) and the human folate catabolite pABA monoglutamate. Can transport 5-methyltetrahydrofolate with low efficiency. In Plasmodium falciparum (isolate 3D7), this protein is Folate transporter 2.